We begin with the raw amino-acid sequence, 104 residues long: MYAIISVGNRQYKVTQDQEFLTEKTGKNAGESFDAKVLLFAESSNKVHIGQPELKTARVSLKVLEDVKGDKIHAYVYKRRKNYQKAWGHRQKLQKVKVVSLSAV.

It belongs to the bacterial ribosomal protein bL21 family. As to quaternary structure, part of the 50S ribosomal subunit. Contacts protein L20.

In terms of biological role, this protein binds to 23S rRNA in the presence of protein L20. This is Large ribosomal subunit protein bL21 from Leptospira borgpetersenii serovar Hardjo-bovis (strain JB197).